The sequence spans 454 residues: Asparagine--tRNA ligase (454 aa).

Belongs to the class-II aminoacyl-tRNA synthetase family. Homodimer.

The protein localises to the cytoplasm. The enzyme catalyses tRNA(Asn) + L-asparagine + ATP = L-asparaginyl-tRNA(Asn) + AMP + diphosphate + H(+). The polypeptide is Asparagine--tRNA ligase (Ureaplasma urealyticum serovar 10 (strain ATCC 33699 / Western)).